The sequence spans 297 residues: Pyridoxal 5'-phosphate synthase subunit PdxS (297 aa).

Asp27 serves as a coordination point for D-ribose 5-phosphate. The active-site Schiff-base intermediate with D-ribose 5-phosphate is the Lys84. Gly156 is a D-ribose 5-phosphate binding site. Arg168 lines the D-glyceraldehyde 3-phosphate pocket. Residues Gly217 and 238 to 239 (GS) contribute to the D-ribose 5-phosphate site.

It belongs to the PdxS/SNZ family. In the presence of PdxT, forms a dodecamer of heterodimers.

The enzyme catalyses aldehydo-D-ribose 5-phosphate + D-glyceraldehyde 3-phosphate + L-glutamine = pyridoxal 5'-phosphate + L-glutamate + phosphate + 3 H2O + H(+). It participates in cofactor biosynthesis; pyridoxal 5'-phosphate biosynthesis. Its function is as follows. Catalyzes the formation of pyridoxal 5'-phosphate from ribose 5-phosphate (RBP), glyceraldehyde 3-phosphate (G3P) and ammonia. The ammonia is provided by the PdxT subunit. Can also use ribulose 5-phosphate and dihydroxyacetone phosphate as substrates, resulting from enzyme-catalyzed isomerization of RBP and G3P, respectively. This is Pyridoxal 5'-phosphate synthase subunit PdxS from Corynebacterium diphtheriae (strain ATCC 700971 / NCTC 13129 / Biotype gravis).